We begin with the raw amino-acid sequence, 150 residues long: Guanine nucleotide-binding protein subunit gamma 2 (150 aa).

Acidic residues predominate over residues 1 to 11; the sequence is MRGEANGEEEQ. The interval 1–59 is disordered; the sequence is MRGEANGEEEQQPPRRNHLRDDAEEEEEVERRAARPVSGQQQQQQRRRPTDVGGGAAMR. Residues 65-97 are a coiled coil; the sequence is GKHRLSAAIARLDQELQSLQDELNELETMEPAS. The 67-residue stretch at 71–137 folds into the G protein gamma domain; it reads AAIARLDQEL…RWFQRVRSSR (67 aa).

G proteins are composed of 3 units, alpha, beta and gamma. Interacts with the beta subunit RGB1.

The protein resides in the cell membrane. Guanine nucleotide-binding proteins (G proteins) are involved as modulators or transducers in various transmembrane signaling systems. The polypeptide is Guanine nucleotide-binding protein subunit gamma 2 (Oryza sativa subsp. indica (Rice)).